Consider the following 199-residue polypeptide: Peroxiredoxin-1 (199 aa).

Residues 6–165 (AFIGKPAPDF…TLRLVQAFQF (160 aa)) enclose the Thioredoxin domain. The active-site Cysteine sulfenic acid (-SOH) intermediate is C52.

Belongs to the peroxiredoxin family. AhpC/Prx1 subfamily. Homodimer; disulfide-linked, upon oxidation. 5 homodimers assemble to form a ring-like decamer. Interacts with GDPD5; forms a mixed-disulfide with GDPD5. Interacts with SESN1 and SESN2. Post-translationally, the enzyme can be inactivated by further oxidation of the cysteine sulfenic acid (C(P)-SOH) to sulphinic acid (C(P)-SO2H) instead of its condensation to a disulfide bond. It can be reactivated by forming a transient disulfide bond with sulfiredoxin SRXN1, which reduces the cysteine sulfinic acid in an ATP- and Mg-dependent manner.

It localises to the cytoplasm. The catalysed reaction is a hydroperoxide + [thioredoxin]-dithiol = an alcohol + [thioredoxin]-disulfide + H2O. In terms of biological role, thiol-specific peroxidase that catalyzes the reduction of hydrogen peroxide and organic hydroperoxides to water and alcohols, respectively. Plays a role in cell protection against oxidative stress by detoxifying peroxides and as sensor of hydrogen peroxide-mediated signaling events. Might participate in the signaling cascades of growth factors and tumor necrosis factor-alpha by regulating the intracellular concentrations of H(2)O(2). Reduces an intramolecular disulfide bond in GDPD5 that gates the ability to GDPD5 to drive postmitotic motor neuron differentiation. The sequence is that of Peroxiredoxin-1 (PRDX1) from Gallus gallus (Chicken).